Reading from the N-terminus, the 425-residue chain is Serine--tRNA ligase (425 aa).

L-serine is bound at residue 231–233 (TAE). Position 262 to 264 (262 to 264 (RSE)) interacts with ATP. An L-serine-binding site is contributed by Glu-285. Position 349 to 352 (349 to 352 (EISS)) interacts with ATP. Position 385 (Ser-385) interacts with L-serine.

The protein belongs to the class-II aminoacyl-tRNA synthetase family. Type-1 seryl-tRNA synthetase subfamily. Homodimer. The tRNA molecule binds across the dimer.

The protein localises to the cytoplasm. The enzyme catalyses tRNA(Ser) + L-serine + ATP = L-seryl-tRNA(Ser) + AMP + diphosphate + H(+). The catalysed reaction is tRNA(Sec) + L-serine + ATP = L-seryl-tRNA(Sec) + AMP + diphosphate + H(+). Its pathway is aminoacyl-tRNA biosynthesis; selenocysteinyl-tRNA(Sec) biosynthesis; L-seryl-tRNA(Sec) from L-serine and tRNA(Sec): step 1/1. In terms of biological role, catalyzes the attachment of serine to tRNA(Ser). Is also able to aminoacylate tRNA(Sec) with serine, to form the misacylated tRNA L-seryl-tRNA(Sec), which will be further converted into selenocysteinyl-tRNA(Sec). The sequence is that of Serine--tRNA ligase from Bacillus velezensis (strain DSM 23117 / BGSC 10A6 / LMG 26770 / FZB42) (Bacillus amyloliquefaciens subsp. plantarum).